Consider the following 284-residue polypeptide: Alpha-S1-casein (284 aa).

Residues 1–15 (MKLLILTCLVAAALA) form the signal peptide. Disordered stretches follow at residues 21 to 44 (RRNA…IVKQ) and 78 to 111 (SSAE…SATE). Low complexity-rich tracts occupy residues 24 to 36 (AVSS…NSSS) and 78 to 99 (SSAE…SSSS). A phosphoserine mark is found at Ser79, Ser93, Ser94, Ser95, Ser96, Ser97, Ser98, and Ser99. 10 repeat units span residues 138–143 (LLQQAS), 144–149 (LAQQAS), 150–155 (LAQQAS), 156–161 (LAQQAL), 162–167 (LAQQPS), 168–173 (LAQQAA), 174–179 (LAQQAS), 180–185 (LAQQAS), 186–191 (LAQQAS), and 192–197 (LAQKHH). Positions 138-197 (LLQQASLAQQASLAQQASLAQQALLAQQPSLAQQAALAQQASLAQQASLAQQASLAQKHH) are 10 X 6 AA tandem repeats.

It belongs to the alpha-casein family. As to expression, mammary gland specific. Secreted in milk.

The protein localises to the secreted. Functionally, important role in the capacity of milk to transport calcium phosphate. This chain is Alpha-S1-casein (Csn1s1), found in Rattus norvegicus (Rat).